The sequence spans 62 residues: Short neurotoxin 3 (62 aa).

Cystine bridges form between C3–C24, C17–C41, C43–C54, and C55–C60.

This sequence belongs to the three-finger toxin family. Short-chain subfamily. Type I alpha-neurotoxin sub-subfamily. As to expression, expressed by the venom gland.

The protein resides in the secreted. Functionally, binds to muscle nicotinic acetylcholine receptor (nAChR) and inhibit acetylcholine from binding to the receptor, thereby impairing neuromuscular transmission. This Naja mossambica (Mozambique spitting cobra) protein is Short neurotoxin 3.